The sequence spans 205 residues: Mitotic spindle assembly checkpoint protein MAD2A (205 aa).

Alanine 2 is modified (N-acetylalanine). Phosphoserine occurs at positions 6, 130, 170, 178, 185, and 195. The 184-residue stretch at 14-197 (RGSAEIVAEF…TTIHKVNSMV (184 aa)) folds into the HORMA domain. The required for assuming the closed conformation and for interaction with CDC20 stretch occupies residues 195-205 (SMVAYKIPVND).

Belongs to the MAD2 family. As to quaternary structure, monomer and homodimer. Heterodimerizes with MAD2L1 in order to form a tetrameric MAD1L1-MAD2L1 core complex. In the closed and open conformation, interacts with MAD1L1. Formation of a heterotetrameric core complex containing two molecules each of MAD1L1 and of MAD2L1 promotes binding of another molecule of MAD2L1 to each MAD2L1, resulting in a heterohexamer. Interacts with MAD2L1BP. Interacts with ADAM17/TACE. Interacts with CDC20. Dimeric MAD2L1 in the closed conformation interacts with CDC20. Monomeric MAD2L1 in the open conformation does not interact with CDC20. CDC20 competes with MAD1L1 for MAD2L1 binding. In the closed conformation, interacts with BUB1B. Interacts with TTK. Interacts with TPR. Binds to UBD (via ubiquitin-like 1 domain) during mitosis. Interacts with isoform 1 and isoform 2 of NEK2. Interacts with HSF1; this interaction occurs in mitosis. Interacts with isoform 3 of MAD1L1; this interaction leads to the cytoplasmic sequestration of MAD2L1. In terms of processing, phosphorylated on multiple serine residues. The level of phosphorylation varies during the cell cycle and is highest during mitosis. Phosphorylation abolishes interaction with MAD1L1 and reduces interaction with CDC20. Phosphorylated by NEK2.

The protein resides in the nucleus. It is found in the chromosome. It localises to the centromere. Its subcellular location is the kinetochore. The protein localises to the cytoplasm. The protein resides in the cytoskeleton. It is found in the spindle pole. Its function is as follows. Component of the spindle-assembly checkpoint that prevents the onset of anaphase until all chromosomes are properly aligned at the metaphase plate. In the closed conformation (C-MAD2) forms a heterotetrameric complex with MAD1L1 at unattached kinetochores during prometaphase, the complex recruits open conformation molecules of MAD2L1 (O-MAD2) and then promotes the conversion of O-MAD2 to C-MAD2. Required for the execution of the mitotic checkpoint which monitors the process of kinetochore-spindle attachment and inhibits the activity of the anaphase promoting complex by sequestering CDC20 until all chromosomes are aligned at the metaphase plate. The chain is Mitotic spindle assembly checkpoint protein MAD2A (MAD2L1) from Homo sapiens (Human).